Reading from the N-terminus, the 445-residue chain is Ubiquitin carboxyl-terminal hydrolase 11 (445 aa).

Residues 1–412 form the USP domain; it reads NSARADLCVA…AAYVLFYQRQ (412 aa). Residues 127–194 form a disordered region; that stretch reads RPSSDDEDDG…GPSHWPQRAR (68 aa). The residue at position 130 (Ser-130) is a Phosphoserine. Acidic residues predominate over residues 131 to 140; sequence DDEDDGDEKD. The active-site Nucleophile is the His-362. Catalysis depends on His-370, which acts as the Proton acceptor. The segment at 416–445 is disordered; it reads RRLQPQPSSSDPPASPACGSPPNSEFMDVN. Low complexity predominate over residues 420-439; the sequence is PQPSSSDPPASPACGSPPNS. Phosphoserine is present on Ser-430.

This sequence belongs to the peptidase C19 family. Monomer. Interacts with RANBP9/RANBPM. Interacts with BRCA2. Interacts with CHUK/IKKA. Interacts with NFKBIA. Associated component of the Polycomb group (PcG) multiprotein PRC1-like complex.

The protein localises to the nucleus. The protein resides in the cytoplasm. Its subcellular location is the chromosome. It carries out the reaction Thiol-dependent hydrolysis of ester, thioester, amide, peptide and isopeptide bonds formed by the C-terminal Gly of ubiquitin (a 76-residue protein attached to proteins as an intracellular targeting signal).. In terms of biological role, protease that can remove conjugated ubiquitin from target proteins and polyubiquitin chains. Inhibits the degradation of target proteins by the proteasome. Cleaves preferentially 'Lys-6' and 'Lys-63'-linked ubiquitin chains. Has lower activity with 'Lys-11' and 'Lys-33'-linked ubiquitin chains, and extremely low activity with 'Lys-27', 'Lys-29' and 'Lys-48'-linked ubiquitin chains (in vitro). Plays a role in the regulation of pathways leading to NF-kappa-B activation. Plays a role in the regulation of DNA repair after double-stranded DNA breaks. Acts as a chromatin regulator via its association with the Polycomb group (PcG) multiprotein PRC1-like complex; may act by deubiquitinating components of the PRC1-like complex. Promotes cell proliferation by deubiquitinating phosphorylated E2F1. The chain is Ubiquitin carboxyl-terminal hydrolase 11 (USP11) from Canis lupus familiaris (Dog).